A 192-amino-acid polypeptide reads, in one-letter code: Ion-translocating oxidoreductase complex subunit A (192 aa).

Transmembrane regions (helical) follow at residues 5-25, 39-59, 63-83, 102-122, 134-154, and 171-191; these read LLLLVGTVLVNNFVLVKFLGL, IGMGLATTFVLTLASVSAYLV, ILTPLGIEYLRTMSFILVIAV, LLGIFLPLITTNCAVLGVALL, IIYGFGAAVGFSLVLILFAAM, and SIAMITAGLMSLAFMGFTGLV.

It belongs to the NqrDE/RnfAE family. In terms of assembly, the complex is composed of six subunits: RnfA, RnfB, RnfC, RnfD, RnfE and RnfG.

It is found in the cell inner membrane. Functionally, part of a membrane-bound complex that couples electron transfer with translocation of ions across the membrane. This Vibrio atlanticus (strain LGP32) (Vibrio splendidus (strain Mel32)) protein is Ion-translocating oxidoreductase complex subunit A.